Consider the following 458-residue polypeptide: Elongation factor 1-alpha (458 aa).

Gly2 bears the N,N,N-trimethylglycine mark. N6,N6-dimethyllysine; alternate is present on Lys3. Lys3 is modified (N6-methyllysine; alternate). The region spanning 5–240 (KTHVNVVVIG…DAIEPPVRPS (236 aa)) is the tr-type G domain. The segment at 14 to 21 (GHVDSGKS) is G1. Residue 14–21 (GHVDSGKS) coordinates GTP. Lys30 is modified (N6-methyllysine). The interval 70–74 (GITID) is G2. Residue Lys79 is modified to N6,N6,N6-trimethyllysine. The tract at residues 91 to 94 (DAPG) is G3. Residues 91-95 (DAPGH) and 153-156 (NKMD) each bind GTP. The G4 stretch occupies residues 153 to 156 (NKMD). A G5 region spans residues 192–194 (SGW). The residue at position 316 (Lys316) is an N6,N6-dimethyllysine; alternate. The residue at position 316 (Lys316) is an N6-methyllysine; alternate. The residue at position 390 (Lys390) is an N6-methyllysine.

The protein belongs to the TRAFAC class translation factor GTPase superfamily. Classic translation factor GTPase family. EF-Tu/EF-1A subfamily.

The protein localises to the cytoplasm. Its function is as follows. This protein promotes the GTP-dependent binding of aminoacyl-tRNA to the A-site of ribosomes during protein biosynthesis. This chain is Elongation factor 1-alpha (TEF-2), found in Mucor circinelloides f. lusitanicus (Mucor racemosus var. lusitanicus).